We begin with the raw amino-acid sequence, 321 residues long: Cytochrome f (321 aa).

Positions 1–35 are cleaved as a signal peptide; that stretch reads MQNRNKNNWMKKWVIRSISILIILNIIAWPSISYA. Tyrosine 36, cysteine 56, cysteine 59, and histidine 60 together coordinate heme. The chain crosses the membrane as a helical span at residues 287 to 306; the sequence is IQGLLLFFVSVIMAQILLVL.

Belongs to the cytochrome f family. In terms of assembly, the 4 large subunits of the cytochrome b6-f complex are cytochrome b6, subunit IV (17 kDa polypeptide, petD), cytochrome f and the Rieske protein, while the 4 small subunits are PetG, PetL, PetM and PetN. The complex functions as a dimer. It depends on heme as a cofactor.

Its subcellular location is the plastid. It is found in the chloroplast thylakoid membrane. Component of the cytochrome b6-f complex, which mediates electron transfer between photosystem II (PSII) and photosystem I (PSI), cyclic electron flow around PSI, and state transitions. The sequence is that of Cytochrome f from Psilotum nudum (Whisk fern).